The primary structure comprises 339 residues: Ketol-acid reductoisomerase (NADP(+)) (339 aa).

One can recognise a KARI N-terminal Rossmann domain in the interval Met-1 to Thr-182. NADP(+)-binding positions include Tyr-24–Gln-27, Arg-48, Ser-51, and Asp-83–Gln-86. His-108 is an active-site residue. Gly-134 is a binding site for NADP(+). The KARI C-terminal knotted domain occupies Thr-183 to Ile-328. Mg(2+)-binding residues include Asp-191, Glu-195, Glu-227, and Glu-231. Substrate is bound at residue Ser-252.

Belongs to the ketol-acid reductoisomerase family. Requires Mg(2+) as cofactor.

The catalysed reaction is (2R)-2,3-dihydroxy-3-methylbutanoate + NADP(+) = (2S)-2-acetolactate + NADPH + H(+). The enzyme catalyses (2R,3R)-2,3-dihydroxy-3-methylpentanoate + NADP(+) = (S)-2-ethyl-2-hydroxy-3-oxobutanoate + NADPH + H(+). The protein operates within amino-acid biosynthesis; L-isoleucine biosynthesis; L-isoleucine from 2-oxobutanoate: step 2/4. It functions in the pathway amino-acid biosynthesis; L-valine biosynthesis; L-valine from pyruvate: step 2/4. Its function is as follows. Involved in the biosynthesis of branched-chain amino acids (BCAA). Catalyzes an alkyl-migration followed by a ketol-acid reduction of (S)-2-acetolactate (S2AL) to yield (R)-2,3-dihydroxy-isovalerate. In the isomerase reaction, S2AL is rearranged via a Mg-dependent methyl migration to produce 3-hydroxy-3-methyl-2-ketobutyrate (HMKB). In the reductase reaction, this 2-ketoacid undergoes a metal-dependent reduction by NADPH to yield (R)-2,3-dihydroxy-isovalerate. The protein is Ketol-acid reductoisomerase (NADP(+)) of Gluconobacter oxydans (strain 621H) (Gluconobacter suboxydans).